Reading from the N-terminus, the 338-residue chain is MIASEIFERGVQDPFCQDCDYEDETDVQSFLGSNDLNDFVNSKLASFSFQNSSKSNNSHHSSSTNAGNTSRHIGNHTIGHHLRKIKTAPHHLYGFVPANSTNNSNEPIRPSPRRIRANSSTLIHQLSRQSTRQSSLGDAADSCFDHKCIKPRSRHSSCYGIPTHLYGLEKYVSSELDSLAVANDQSNDLTSPLTSVSTPASNSNSYLNLNSSSAAYPSSYLSNEKNNRLKLISHGKISSNNVPGHSGNLNHYHRERTPSNLRRESFSLLSNGSSSSPLQTRNNSYSNSLVKSPSNSSLNTSVASSNEESSPHTSNCLEERNPRRKSFIKLSLASSFSN.

The segment covering 50–70 has biased composition (low complexity); the sequence is QNSSKSNNSHHSSSTNAGNTS. The tract at residues 50–75 is disordered; the sequence is QNSSKSNNSHHSSSTNAGNTSRHIGN. At Ser119 the chain carries Phosphoserine. The span at 267-306 shows a compositional bias: low complexity; sequence SLLSNGSSSSPLQTRNNSYSNSLVKSPSNSSLNTSVASSN. The disordered stretch occupies residues 267–322; the sequence is SLLSNGSSSSPLQTRNNSYSNSLVKSPSNSSLNTSVASSNEESSPHTSNCLEERNP. Residues 307 to 316 show a composition bias toward polar residues; the sequence is EESSPHTSNC.

The protein belongs to the ISF1/MBR1 family.

Functionally, could influence the NAM7/UPF1 function, possibly at the level of mRNA turnover. Participates in mitochondrial biogenesis. In Saccharomyces cerevisiae (strain ATCC 204508 / S288c) (Baker's yeast), this protein is Increasing suppression factor 1 (ISF1).